A 530-amino-acid polypeptide reads, in one-letter code: Na(+)/H(+) antiporter NhaB (530 aa).

Helical transmembrane passes span 13–33, 98–118, 123–145, 149–166, 205–225, 238–258, 308–328, 330–350, 356–376, 393–413, 451–471, and 480–500; these read FLGKAPDWYKLAIISFLIINP, LLLVFMVAGIYFMKELLLFIF, LGIQSKILLSVAFCVAAAFLSAF, LTVIAVVISVAVGFYSIY, LLMHAGVGTALGGVMTMVGEP, FGEFIIRMLPVTLPVFFCGIL, IAVWLIVGLALHVAEVGLIGL, VIILATAFTGVIEEHSMGKAF, FTALLAVFFAVVAVIIDQALF, LALFYVANGILSMVSDNVFVG, ATPNGQAAFLFLLTSALAPLI, and IMALPYTIVLALVGLAGIVFF.

It belongs to the NhaB Na(+)/H(+) (TC 2.A.34) antiporter family.

Its subcellular location is the cell inner membrane. It carries out the reaction 2 Na(+)(in) + 3 H(+)(out) = 2 Na(+)(out) + 3 H(+)(in). Its function is as follows. Na(+)/H(+) antiporter that extrudes sodium in exchange for external protons. In Vibrio atlanticus (strain LGP32) (Vibrio splendidus (strain Mel32)), this protein is Na(+)/H(+) antiporter NhaB.